A 301-amino-acid chain; its full sequence is MRSEGDTWDITTSVGSTALFVATARALEAQKPDPLAVDPYAEIFCRAVGGTAADVLDGKDPDHQLKTTDFGENFVNFQGARTRYFDNYFARTADAGVRQVVVLAAGLDSRAYRLDWPAATTIFELDQPQVLDFKREVLARAGAQPRAERREIAIDLREDWPQALRDSGFDPAKPSAWIAEGLLIYLPASAQEQLFTGIDGLAGHGSHVAVEDGAPMKPEDFETAVAEERAATAQGDQRVFFQLVYNEQCAPATEWFGNRGWTAVGTPLADYLREVGRPVPGPETEAGPMIARNTLVSAVRA.

S-adenosyl-L-methionine contacts are provided by residues aspartate 126 and aspartate 155–leucine 156.

The protein belongs to the UPF0677 family.

In terms of biological role, exhibits S-adenosyl-L-methionine-dependent methyltransferase activity. The chain is Putative S-adenosyl-L-methionine-dependent methyltransferase MAP_3777 from Mycolicibacterium paratuberculosis (strain ATCC BAA-968 / K-10) (Mycobacterium paratuberculosis).